The chain runs to 441 residues: Probable indole-3-acetic acid-amido synthetase GH3.9 (441 aa).

Belongs to the IAA-amido conjugating enzyme family. Expressed in etiolated seedlings and roots.

Functionally, may catalyze the synthesis of indole-3-acetic acid (IAA)-amino acid conjugates, providing a mechanism for the plant to cope with the presence of excess auxin. The sequence is that of Probable indole-3-acetic acid-amido synthetase GH3.9 (GH3.9) from Oryza sativa subsp. japonica (Rice).